Reading from the N-terminus, the 151-residue chain is 3-hydroxyacyl-[acyl-carrier-protein] dehydratase FabZ (151 aa).

Residue H54 is part of the active site.

This sequence belongs to the thioester dehydratase family. FabZ subfamily.

The protein localises to the cytoplasm. The catalysed reaction is a (3R)-hydroxyacyl-[ACP] = a (2E)-enoyl-[ACP] + H2O. In terms of biological role, involved in unsaturated fatty acids biosynthesis. Catalyzes the dehydration of short chain beta-hydroxyacyl-ACPs and long chain saturated and unsaturated beta-hydroxyacyl-ACPs. The polypeptide is 3-hydroxyacyl-[acyl-carrier-protein] dehydratase FabZ (Cronobacter sakazakii (strain ATCC BAA-894) (Enterobacter sakazakii)).